We begin with the raw amino-acid sequence, 153 residues long: Superoxide dismutase [Cu-Zn] (153 aa).

Asn24 carries N-linked (GlcNAc...) asparagine glycosylation. Cu cation-binding residues include His47, His49, and His64. A disulfide bond links Cys58 and Cys147. Residues His64, His72, His81, and Asp84 each coordinate Zn(2+). His121 serves as a coordination point for Cu cation. Over residues Asp126 to Lys137 the composition is skewed to basic and acidic residues. The tract at residues Asp126–Pro145 is disordered. Substrate is bound at residue Arg144.

This sequence belongs to the Cu-Zn superoxide dismutase family. Homodimer. The cofactor is Cu cation. It depends on Zn(2+) as a cofactor.

It localises to the cytoplasm. The enzyme catalyses 2 superoxide + 2 H(+) = H2O2 + O2. Destroys radicals which are normally produced within the cells and which are toxic to biological systems. This is Superoxide dismutase [Cu-Zn] from Humicola lutea.